The chain runs to 93 residues: Aspartyl/glutamyl-tRNA(Asn/Gln) amidotransferase subunit C (93 aa).

This sequence belongs to the GatC family. Heterotrimer of A, B and C subunits.

The enzyme catalyses L-glutamyl-tRNA(Gln) + L-glutamine + ATP + H2O = L-glutaminyl-tRNA(Gln) + L-glutamate + ADP + phosphate + H(+). It carries out the reaction L-aspartyl-tRNA(Asn) + L-glutamine + ATP + H2O = L-asparaginyl-tRNA(Asn) + L-glutamate + ADP + phosphate + 2 H(+). Its function is as follows. Allows the formation of correctly charged Asn-tRNA(Asn) or Gln-tRNA(Gln) through the transamidation of misacylated Asp-tRNA(Asn) or Glu-tRNA(Gln) in organisms which lack either or both of asparaginyl-tRNA or glutaminyl-tRNA synthetases. The reaction takes place in the presence of glutamine and ATP through an activated phospho-Asp-tRNA(Asn) or phospho-Glu-tRNA(Gln). This is Aspartyl/glutamyl-tRNA(Asn/Gln) amidotransferase subunit C from Nautilia profundicola (strain ATCC BAA-1463 / DSM 18972 / AmH).